A 176-amino-acid chain; its full sequence is Large ribosomal subunit protein uL10 (176 aa).

The protein belongs to the universal ribosomal protein uL10 family. As to quaternary structure, part of the ribosomal stalk of the 50S ribosomal subunit. The N-terminus interacts with L11 and the large rRNA to form the base of the stalk. The C-terminus forms an elongated spine to which L12 dimers bind in a sequential fashion forming a multimeric L10(L12)X complex.

In terms of biological role, forms part of the ribosomal stalk, playing a central role in the interaction of the ribosome with GTP-bound translation factors. The sequence is that of Large ribosomal subunit protein uL10 from Natranaerobius thermophilus (strain ATCC BAA-1301 / DSM 18059 / JW/NM-WN-LF).